The following is a 249-amino-acid chain: MKYSLKTVMSLVDHSGLKPYLREDEIARLIGEASEMGNYSVCIEPIYGNFAVEYIKEKGYSLKVDVTLDFPFGSLPTSARKKIIEDSVYADEIDMVIPIGYVKSHRWDKVEQDINDVVSTARDLGLVSKIITEDGYLTLDEKLKTYDIVIRSAPDFIKTSTGFADKEFCKSLGNETGATPENVKLMSEIAKKIGSNIGIKAAGGIHTYDQVEKIIDSAGMIPEPSNIRLGMSGTKKLYEEMKKASVQQS.

The active-site Proton donor/acceptor is the Asp94. The active-site Schiff-base intermediate with acetaldehyde is Lys158. The Proton donor/acceptor role is filled by Lys200.

This sequence belongs to the DeoC/FbaB aldolase family. DeoC type 1 subfamily.

The protein resides in the cytoplasm. The enzyme catalyses 2-deoxy-D-ribose 5-phosphate = D-glyceraldehyde 3-phosphate + acetaldehyde. The protein operates within carbohydrate degradation; 2-deoxy-D-ribose 1-phosphate degradation; D-glyceraldehyde 3-phosphate and acetaldehyde from 2-deoxy-alpha-D-ribose 1-phosphate: step 2/2. Catalyzes a reversible aldol reaction between acetaldehyde and D-glyceraldehyde 3-phosphate to generate 2-deoxy-D-ribose 5-phosphate. The polypeptide is Deoxyribose-phosphate aldolase (Thermoplasma volcanium (strain ATCC 51530 / DSM 4299 / JCM 9571 / NBRC 15438 / GSS1)).